Consider the following 574-residue polypeptide: Putative dehydratase IlvD1 (574 aa).

Positions 124 and 197 each coordinate [4Fe-4S] cluster.

It belongs to the IlvD/Edd family. Requires [4Fe-4S] cluster as cofactor.

Involved in the degradation of galactose via the DeLey-Doudoroff pathway. This is Putative dehydratase IlvD1 (ilvD1) from Rhizobium meliloti (strain 1021) (Ensifer meliloti).